The sequence spans 596 residues: MHRYRSHTCAALRKSDVGSTVRISGWVHRVRDHGGVLFIDLRDHYGITQVVADPDSPAFKLAETVRGEWVIRIDGLVKARTEDTVNKTMPTGEIELYAQEIEVLSAAKELPLPIFGEPDYPEDVRLKYRFLDLRRDTLHKNIVKRTQVISSMRRHMGEVGFTEYTTPILTASSPEGARDFLVPSRIHPGTFYALPQAPQQYKQLLMVAGFDRYFQIAPCFRDEDPRADRLPGEFYQLDLEMSFVTQEDVWNTMAPLMTSIFEEFAEGKPVTKEWPRIPYDVAIRKYGSDKPDLRNPIVMEAVTEHFAGSGFKVFANMIASNPKVEVWAIPAKTGGSRAFCDRMNAWAQSQGQPGLGYIFWRKEGEKLEGAGPLAKNIGEERTDAIRTQLGLDDGDACFFVAGDPAKFYKFAGEARTRAGDELNLIDRDRFELCWIVDFPFFEWSEEEKKVDFAHNPFSMPQGGLEALQNQDPLTIKAYQYDAVCNGFEIASGSIRNQSPETMVAAFEKVGLSQADVEERFGGLYRAFQYGAPPHGGAAFGIDRIVMLLVGAKNLREISLFPMNQQAQDLLMGAPSVATPTQLRELAIRPVPPVKKD.

L-aspartate is bound at residue Glu175. An aspartate region spans residues 199-202 (QQYK). The L-aspartate site is built by Arg221 and His454. 221-223 (RDE) is an ATP binding site. Position 488 (Glu488) interacts with ATP. Arg495 is an L-aspartate binding site. Residue 540–543 (GIDR) coordinates ATP.

The protein belongs to the class-II aminoacyl-tRNA synthetase family. Type 1 subfamily. In terms of assembly, homodimer.

The protein localises to the cytoplasm. The catalysed reaction is tRNA(Asx) + L-aspartate + ATP = L-aspartyl-tRNA(Asx) + AMP + diphosphate. In terms of biological role, aspartyl-tRNA synthetase with relaxed tRNA specificity since it is able to aspartylate not only its cognate tRNA(Asp) but also tRNA(Asn). Reaction proceeds in two steps: L-aspartate is first activated by ATP to form Asp-AMP and then transferred to the acceptor end of tRNA(Asp/Asn). The sequence is that of Aspartate--tRNA(Asp/Asn) ligase from Rhizobium rhizogenes (strain K84 / ATCC BAA-868) (Agrobacterium radiobacter).